The sequence spans 196 residues: Sesquiterpene phosphatase astK (196 aa).

Belongs to the HAD-like hydrolase superfamily.

It carries out the reaction (S,S)-drim-8-en-11-yl phosphate + H2O = (S,S)-drim-8-en-11-ol + phosphate. It functions in the pathway secondary metabolite biosynthesis; terpenoid biosynthesis. Its function is as follows. Sesquiterpene phosphatase; part of the gene cluster that mediates the biosynthesis of astellolides, drimane-type sesquiterpene esters that show antimicrobial, anti-inflammatory, and anti-tumor activities. The first step in astellolide biosynthesis is performed by the sesquiterpene cyclase astC that catalyzes the formation of drimanyl pyrophosphate from farnesyl pyrophosphate. Drimanyl pyrophosphate is then dephosphorylated by the sesquiterpene phosphatase astI to produce drimanyl monophosphate which is further dephosphorylated to drim-8-ene-11-ol by atsK. Drim-8-ene-11-ol is converted to confertifolin, probably by the cytochrome P450 monooxygenase astD and/or the dehydrogenase astE. The cytochrome P450 monooxygenases astB, astF and astJ then hydroxylate confertifolin at C6, C14, or C15 to form trihydroxy confertifolin. The nonribosomal peptide synthetase astA catalyzes ester bond formation between trihydroxy contifolin and benzoic acid (BA) or 4-hydroxy benzoic acid (4HBA), leading to the formation of dideacetyl astellolides A and B, respectively. Finally, the O-acetyltransferase astG converts dideacetyl astellolides A and B into deacetyl astellolides A and B. The sequence is that of Sesquiterpene phosphatase astK from Aspergillus oryzae (strain ATCC 42149 / RIB 40) (Yellow koji mold).